Consider the following 940-residue polypeptide: UvrABC system protein A (940 aa).

31–38 (GLSGSGKS) contributes to the ATP binding site. A C4-type zinc finger spans residues 252-279 (CPHCGYSMQELEPRLFSFNNPAGACGTC). ABC transporter domains are found at residues 309 to 586 (WDQK…PDSL) and 606 to 936 (RDKN…RFLK). 639–646 (GVSGSGKS) serves as a coordination point for ATP. The C4-type zinc-finger motif lies at 739–765 (CEACQGDGVIKVEMHFLPDVYVPCDVC).

Belongs to the ABC transporter superfamily. UvrA family. As to quaternary structure, forms a heterotetramer with UvrB during the search for lesions.

The protein resides in the cytoplasm. Its function is as follows. The UvrABC repair system catalyzes the recognition and processing of DNA lesions. UvrA is an ATPase and a DNA-binding protein. A damage recognition complex composed of 2 UvrA and 2 UvrB subunits scans DNA for abnormalities. When the presence of a lesion has been verified by UvrB, the UvrA molecules dissociate. The sequence is that of UvrABC system protein A from Vibrio vulnificus (strain YJ016).